A 542-amino-acid chain; its full sequence is Apolipoprotein N-acyltransferase (542 aa).

Helical transmembrane passes span 24–44 (VVAS…GLFA), 54–74 (VWCI…SWML), 85–105 (FVWG…SCLV), 116–136 (ALVW…YGLL), 160–180 (FFGW…CFAV), and 190–210 (GLWL…YEYL). Positions 220–499 (LRVAIVQPGY…TGVLQVSVPL (280 aa)) constitute a CN hydrolase domain. The active-site Proton acceptor is glutamate 264. Lysine 349 is an active-site residue. The active-site Nucleophile is cysteine 404. Residues 509 to 529 (LGDAPLLLIAVCSVIGAIAYF) traverse the membrane as a helical segment.

This sequence belongs to the CN hydrolase family. Apolipoprotein N-acyltransferase subfamily.

It is found in the cell inner membrane. The enzyme catalyses N-terminal S-1,2-diacyl-sn-glyceryl-L-cysteinyl-[lipoprotein] + a glycerophospholipid = N-acyl-S-1,2-diacyl-sn-glyceryl-L-cysteinyl-[lipoprotein] + a 2-acyl-sn-glycero-3-phospholipid + H(+). The protein operates within protein modification; lipoprotein biosynthesis (N-acyl transfer). Its function is as follows. Catalyzes the phospholipid dependent N-acylation of the N-terminal cysteine of apolipoprotein, the last step in lipoprotein maturation. This Chlamydia trachomatis serovar D (strain ATCC VR-885 / DSM 19411 / UW-3/Cx) protein is Apolipoprotein N-acyltransferase.